The sequence spans 519 residues: Seed lectin (519 aa).

2 disulfide bridges follow: Cys-249–Cys-258 and Cys-274–Cys-293. 2 consecutive Ricin B-type lectin domains span residues 261–387 and 390–518; these read ETRT…WRVG and VQPI…WVLF. A 1-alpha repeat occupies 271–311; that stretch reads DALCVDVAGALTSDGSRLILYPCGQQVNQKWTFHSDGTVRS. A carbohydrate-binding positions include 276–279 and 296–298; these read DVAG and QVN. One copy of the 1-beta repeat lies at 312–352; that stretch reads LGKCLATNNSKFGNLVVIYDCSKLAAEDISWDVSVGGTIMN. Cys-315 and Cys-332 are oxidised to a cystine. The stretch at 356-388 is one 1-gamma repeat; it reads EDLALTSNKATRSTNLTMEVNTYSASQGWRVGN. Asn-370 carries an N-linked (GlcNAc...) asparagine glycan. A 2-alpha repeat occupies 401-438; that stretch reads DDMCLEATDGNTNMWLEECVPNQREQSWALYSDGTIRV. Disulfide bonds link Cys-404–Cys-419 and Cys-445–Cys-464. A 2-beta repeat occupies 442–482; the sequence is RELCVTASSSTYDNWKVITILNCDGSNNQRWVFLADGSIST. Residues Asp-454, 491-494, 505-508, and Asn-512 each bind a carbohydrate; these read DVAR and HRPH. The 2-gamma repeat unit spans residues 486 to 513; sequence QRLAMDVARSDVDLKKIILHRPHGDLNQ.

It in the N-terminal section; belongs to the ribosome-inactivating protein family. Type 2 RIP subfamily. Heterotrimer consisting of Aalpha, Abeta and B chains with Abeta and B being disulfide-linked.

Its function is as follows. Seed lectin similar to type 2 ribosome-inactivating proteins. The Aalpha and Abeta chains constitute the rRNA glycosidase domain and the B chain the carbohydrate-binding lectin domain. Is predicted to have no glycosidase activity and, hence, to be non-toxic, due to small changes in both the nucleotide binding and carbohydrate binding capabilities. Binds galactose and derivatives with a preference for the beta-anomeric forms. Binds prophyrins. Has hemagglutinating activity towards rabbit and human erythrocytes. This Trichosanthes anguina (Snake gourd) protein is Seed lectin.